The chain runs to 218 residues: uncharacterized protein (218 aa).

This is an uncharacterized protein from Caenorhabditis elegans.